Reading from the N-terminus, the 213-residue chain is 3-isopropylmalate dehydratase small subunit (213 aa).

This sequence belongs to the LeuD family. LeuD type 1 subfamily. In terms of assembly, heterodimer of LeuC and LeuD.

The catalysed reaction is (2R,3S)-3-isopropylmalate = (2S)-2-isopropylmalate. It functions in the pathway amino-acid biosynthesis; L-leucine biosynthesis; L-leucine from 3-methyl-2-oxobutanoate: step 2/4. Its function is as follows. Catalyzes the isomerization between 2-isopropylmalate and 3-isopropylmalate, via the formation of 2-isopropylmaleate. The sequence is that of 3-isopropylmalate dehydratase small subunit from Pseudomonas savastanoi pv. phaseolicola (strain 1448A / Race 6) (Pseudomonas syringae pv. phaseolicola (strain 1448A / Race 6)).